We begin with the raw amino-acid sequence, 144 residues long: Large ribosomal subunit protein uL16 (144 aa).

The protein belongs to the universal ribosomal protein uL16 family. Part of the 50S ribosomal subunit.

Binds 23S rRNA and is also seen to make contacts with the A and possibly P site tRNAs. The sequence is that of Large ribosomal subunit protein uL16 from Ligilactobacillus salivarius (strain UCC118) (Lactobacillus salivarius).